A 243-amino-acid polypeptide reads, in one-letter code: Carboxy-S-adenosyl-L-methionine synthase (243 aa).

S-adenosyl-L-methionine-binding positions include Y40, 65 to 67, 90 to 91, 118 to 119, N133, and R200; these read GCS, DN, and DI.

This sequence belongs to the class I-like SAM-binding methyltransferase superfamily. Cx-SAM synthase family. Homodimer.

It catalyses the reaction prephenate + S-adenosyl-L-methionine = carboxy-S-adenosyl-L-methionine + 3-phenylpyruvate + H2O. Functionally, catalyzes the conversion of S-adenosyl-L-methionine (SAM) to carboxy-S-adenosyl-L-methionine (Cx-SAM). The chain is Carboxy-S-adenosyl-L-methionine synthase from Shewanella sp. (strain MR-7).